A 501-amino-acid chain; its full sequence is GTPase Obg (501 aa).

Residues 2-159 enclose the Obg domain; the sequence is NRFIDRVVLH…HDLILELKSM (158 aa). Residues 160–341 form the OBG-type G domain; sequence ADVGLVGFPS…LKYKLLEIVQ (182 aa). Residues 166–173, 191–195, 212–215, 292–295, and 322–324 contribute to the GTP site; these read GFPSAGKS, FTTLQ, DVPG, NKAD, and SAV. 2 residues coordinate Mg(2+): Ser-173 and Thr-193. The OCT domain maps to 362–442; sequence VDHRTKGQFQ…IGGISFEWEP (81 aa).

This sequence belongs to the TRAFAC class OBG-HflX-like GTPase superfamily. OBG GTPase family. In terms of assembly, monomer. The cofactor is Mg(2+).

The protein resides in the cytoplasm. In terms of biological role, an essential GTPase which binds GTP, GDP and possibly (p)ppGpp with moderate affinity, with high nucleotide exchange rates and a fairly low GTP hydrolysis rate. Plays a role in control of the cell cycle, stress response, ribosome biogenesis and in those bacteria that undergo differentiation, in morphogenesis control. This is GTPase Obg from Corynebacterium glutamicum (strain R).